The following is a 392-amino-acid chain: Bifunctional enzyme Fae/Hps (392 aa).

The segment at 1 to 161 is formaldehyde-activating enzyme; that stretch reads MFQIGEALMG…EESNKSTHAI (161 aa). H17 (proton donor) is an active-site residue. Residues D19, L48, K66, T68, and Q83 each contribute to the substrate site. Residues 162-392 form a 3-hexulose-6-phosphate synthase region; that stretch reads MGFKVTRLWD…IDQFRVMTDF (231 aa).

The protein in the N-terminal section; belongs to the formaldehyde-activating enzyme family. In the C-terminal section; belongs to the HPS/KGPDC family. HPS subfamily.

It catalyses the reaction 5,6,7,8-tetrahydromethanopterin + formaldehyde = 5,10-methylenetetrahydromethanopterin + H2O. It carries out the reaction D-ribulose 5-phosphate + formaldehyde = D-arabino-hex-3-ulose 6-phosphate. It functions in the pathway carbohydrate biosynthesis; D-ribose 5-phosphate biosynthesis. Catalyzes the condensation of formaldehyde with tetrahydromethanopterin (H(4)MPT) to 5,10-methylenetetrahydromethanopterin. Functionally, catalyzes the reversible formation of ribulose-5-phosphate and formaldehyde from 3-hexulose-6-phosphate. This Methanosarcina mazei (strain ATCC BAA-159 / DSM 3647 / Goe1 / Go1 / JCM 11833 / OCM 88) (Methanosarcina frisia) protein is Bifunctional enzyme Fae/Hps.